Here is a 192-residue protein sequence, read N- to C-terminus: Adenylate kinase (192 aa).

Residue 12-17 coordinates ATP; the sequence is GSGKTT. The segment at 34-63 is NMP; the sequence is STGDLLRAEVASGSELGKTIDSFISKGNLV. Residues Thr35, Arg40, 61–63, 88–91, and Gln95 contribute to the AMP site; these read NLV and GYPR. The segment at 130 to 136 is LID; sequence GRNRGTD. Arg131 contacts ATP. Residues Arg133 and Arg145 each contribute to the AMP site. Arg173 is a binding site for ATP.

This sequence belongs to the adenylate kinase family. In terms of assembly, monomer.

The protein resides in the cytoplasm. It catalyses the reaction AMP + ATP = 2 ADP. The protein operates within purine metabolism; AMP biosynthesis via salvage pathway; AMP from ADP: step 1/1. Functionally, catalyzes the reversible transfer of the terminal phosphate group between ATP and AMP. Plays an important role in cellular energy homeostasis and in adenine nucleotide metabolism. In Campylobacter jejuni (strain RM1221), this protein is Adenylate kinase.